We begin with the raw amino-acid sequence, 223 residues long: Transcriptional regulator HMO1 (223 aa).

Disordered stretches follow at residues 69 to 89 (IEAT…APKK) and 165 to 223 (DGSA…HGSP). The span at 70-86 (EATESKKKRKQEKDPNA) shows a compositional bias: basic and acidic residues. A DNA-binding region (HMG box) is located at residues 87-160 (PKKPLTMFFQ…IYNIEKKKYE (74 aa)). The span at 204–223 (KKKKKTEKKEKKKKSGHGSP) shows a compositional bias: basic residues.

Its subcellular location is the nucleus. In terms of biological role, transcription factor that binds upstream of hexose and ergosterol metabolism, as well as cell cycle genes. Activates pseudohyphal growth. This is Transcriptional regulator HMO1 (HMO1) from Candida albicans (strain SC5314 / ATCC MYA-2876) (Yeast).